The following is a 987-amino-acid chain: MQSQDSCYGVAFRSIITNDEALFKKTIHFYHTLGFATVKDFNKFKHGENSLLSSGTSQDSLREVWLESFKLSEVDASGFRIPQQEATNKAQSQGALLKIRLVMSAPIDETFDTNETATITYFSTDLNKIVEKFPKQAEKLSDTLVFLKDPMGNNITFSGLANATDSAPTSKDAFLEATSEDEIISRASSDASDLLRQTLGSSQKKKKIAVMTSGGDSPGMNAAVRAVVRTGIHFGCDVFAVYEGYEGLLRGGKYLKKMAWEDVRGWLSEGGTLIGTARSMEFRKREGRRQAAGNLISQGIDALVVCGGDGSLTGADLFRHEWPSLVDELVAEGRFTKEEVAPYKNLSIVGLVGSIDNDMSGTDSTIGAYSALERICEMVDYIDATAKSHSRAFVVEVMGRHCGWLALMAGIATGADYIFIPERAVPHGKWQDELKEVCQRHRSKGRRNNTIIVAEGALDDQLNPVTANDVKDALIELGLDTKVTILGHVQRGGTAVAHDRWLATLQGVDAVKAVLEFTPETPSPLIGILENKIIRMPLVESVKLTKSVATAIENKDFDKAISLRDTEFIELYENFLSTTVKDDGSELLPVSDRLNIGIVHVGAPSAALNAATRAATLYCLSHGHKPYAIMNGFSGLIQTGEVKELSWIDVENWHNLGGSEIGTNRSVASEDLGTIAYYFQKNKLDGLIILGGFEGFRSLKQLRDGRTQHPIFNIPMCLIPATVSNNVPGTEYSLGVDTCLNALVNYTDDIKQSASATRRRVFVCEVQGGHSGYIASFTGLITGAVSVYTPEKKIDLASIREDITLLKENFRHDKGENRNGKLLVRNEQASSVYSTQLLADIISEASKGKFGVRTAIPGHVQQGGVPSSKDRVTASRFAVKCIKFIEQWNKKNEASPNTDAKVLRFKFDTHGEKVPTVEHEDDSAAVICVNGSHVSFKPIANLWENETNVELRKGFEVHWAEYNKIGDILSGRLKLRAEVAALAAENK.

The interval 1–580 is N-terminal catalytic PFK domain 1; the sequence is MQSQDSCYGV…LYENFLSTTV (580 aa). Ser3 carries the post-translational modification Phosphoserine. Residue Lys89 forms a Glycyl lysine isopeptide (Lys-Gly) (interchain with G-Cter in ubiquitin) linkage. Ser166, Ser179, Ser185, Ser189, and Ser192 each carry phosphoserine. An ATP-binding site is contributed by Gly215. Position 217 is a phosphoserine (Ser217). ATP-binding positions include 278–279 and 308–311; these read RS and GDGS. Asp309 provides a ligand contact to Mg(2+). Residues 354 to 356, Arg391, and 398 to 400 each bind beta-D-fructose 6-phosphate; these read SID and MGR. Asp356 acts as the Proton acceptor in catalysis. Position 450 is a phosphothreonine (Thr450). Beta-D-fructose 6-phosphate-binding positions include Glu455, Lys482, and 488 to 491; that span reads HVQR. The segment at 581–594 is interdomain linker; it reads KDDGSELLPVSDRL. A C-terminal regulatory PFK domain 2 region spans residues 595-987; the sequence is NIGIVHVGAP…EVAALAAENK (393 aa). Lys625 participates in a covalent cross-link: Glycyl lysine isopeptide (Lys-Gly) (interchain with G-Cter in ubiquitin). Residues Arg665, 722–726, Arg760, 767–769, Glu827, Arg853, 859–862, and Arg952 contribute to the beta-D-fructose 2,6-bisphosphate site; these read TVSNN, QGG, and HVQQ.

Belongs to the phosphofructokinase type A (PFKA) family. ATP-dependent PFK group I subfamily. Eukaryotic two domain clade 'E' sub-subfamily. Heterooctamer of 4 alpha and 4 beta chains. Mg(2+) is required as a cofactor.

The protein resides in the cytoplasm. Its subcellular location is the mitochondrion outer membrane. The enzyme catalyses beta-D-fructose 6-phosphate + ATP = beta-D-fructose 1,6-bisphosphate + ADP + H(+). It functions in the pathway carbohydrate degradation; glycolysis; D-glyceraldehyde 3-phosphate and glycerone phosphate from D-glucose: step 3/4. With respect to regulation, allosterically activated by ADP, AMP, or fructose 2,6-bisphosphate, and allosterically inhibited by ATP or citrate. Its function is as follows. Catalyzes the phosphorylation of D-fructose 6-phosphate to fructose 1,6-bisphosphate by ATP, the first committing step of glycolysis. This chain is ATP-dependent 6-phosphofructokinase subunit alpha (PFK1), found in Saccharomyces cerevisiae (strain ATCC 204508 / S288c) (Baker's yeast).